Consider the following 314-residue polypeptide: MACGSVDPQGLLSPPLSSARLSNVPHVEGPWFWSCGQTNISCKVVNGKVVEVGKWPWQVSILFLGMYICSGSLIHHHWVLTAAHCLQRSKNPANYTVKVGVQTLPDNSSSELLVTSIVIHENFINHMSHDIAILKLKYPVTWSPFIQPICLPEVNFKPSIGTMCWVIGWGLEKAKGAPKTPYSVQGVAVRIVNNEICNHRYQFLLLKNQKKFIGNDMLCTSPEWGLDTCQDASGSSLVCQMNKTWIQMGVVSWNFGCGRRQFPSIYTSTSHFTQWIKRQIGDLKFASMAVPSFLSPFILTGYILLVSLGSLWLL.

A Peptidase S1 domain is found at 44–281; the sequence is VVNGKVVEVG…FTQWIKRQIG (238 aa). A disulfide bridge connects residues cysteine 69 and cysteine 85. Catalysis depends on charge relay system residues histidine 84 and aspartate 130. 3 disulfides stabilise this stretch: cysteine 164/cysteine 239, cysteine 197/cysteine 219, and cysteine 229/cysteine 257. Serine 233 (charge relay system) is an active-site residue. Residues 293 to 313 traverse the membrane as a helical segment; that stretch reads FLSPFILTGYILLVSLGSLWL.

Belongs to the peptidase S1 family.

Its subcellular location is the membrane. The chain is Serine protease 46 (Prss46) from Rattus norvegicus (Rat).